The chain runs to 548 residues: Non-structural protein NS1 (548 aa).

Belongs to the orbivirus non-structural protein NS1 family.

The polypeptide is Non-structural protein NS1 (Segment-5) (African horse sickness virus (AHSV)).